The sequence spans 246 residues: Protein 3F (246 aa).

The signal sequence occupies residues 1 to 19 (MKLLSKLILTLALATYASA). N-linked (GlcNAc...) asparagine glycosylation occurs at N52. Basic and acidic residues predominate over residues 113–124 (EVRPIDRLKDNA). The tract at residues 113–223 (EVRPIDRLKD…EEAEHVEKGA (111 aa)) is disordered. Residues 126-145 (AANTENAQKSPNTQSTQKGS) show a composition bias toward polar residues. 3 repeat units span residues 145-153 (SPKSDAKEA), 154-162 (SPKTDAKEA), and 163-171 (SPKSDAKEA). Residues 145-176 (SPKSDAKEASPKTDAKEASPKSDAKEASPKTD) are 3.5 X 9 AA tandem repeats of S-P-K-[ST]-D-A-K-E-A. Basic and acidic residues predominate over residues 146 to 177 (PKSDAKEASPKTDAKEASPKSDAKEASPKTDT). The 4; truncated repeat unit spans residues 172 to 176 (SPKTD). Low complexity predominate over residues 181–213 (SSPKTDTKSSTQKPSSSSDSSKAKAEANTAANN).

In Dictyostelium discoideum (Social amoeba), this protein is Protein 3F (pspG).